The primary structure comprises 86 residues: Cytochrome c6 (86 aa).

C14, C17, H18, and M58 together coordinate heme c.

Belongs to the cytochrome c family. PetJ subfamily. As to quaternary structure, monomer. Post-translationally, binds 1 heme c group covalently per subunit.

It is found in the plastid. Its subcellular location is the chloroplast thylakoid lumen. Functions as an electron carrier between membrane-bound cytochrome b6-f and photosystem I in oxygenic photosynthesis. The polypeptide is Cytochrome c6 (petJ) (Bumilleriopsis filiformis (Yellow-green alga)).